A 420-amino-acid chain; its full sequence is 3-phosphoshikimate 1-carboxyvinyltransferase (420 aa).

The tract at residues 1–24 (MTRTAKLTIIPPGRPLSGRAMPPG) is disordered. 3-phosphoshikimate contacts are provided by Lys26, Ser27, and Arg31. Lys26 contributes to the phosphoenolpyruvate binding site. 2 residues coordinate phosphoenolpyruvate: Gly97 and Arg125. Ser170, Ser171, Gln172, Asp297, Asn320, and Lys324 together coordinate 3-phosphoshikimate. Residue Gln172 coordinates phosphoenolpyruvate. Catalysis depends on Asp297, which acts as the Proton acceptor. Phosphoenolpyruvate-binding residues include Arg328, Arg375, and Lys400.

The protein belongs to the EPSP synthase family. As to quaternary structure, monomer.

The protein resides in the cytoplasm. It catalyses the reaction 3-phosphoshikimate + phosphoenolpyruvate = 5-O-(1-carboxyvinyl)-3-phosphoshikimate + phosphate. It participates in metabolic intermediate biosynthesis; chorismate biosynthesis; chorismate from D-erythrose 4-phosphate and phosphoenolpyruvate: step 6/7. Catalyzes the transfer of the enolpyruvyl moiety of phosphoenolpyruvate (PEP) to the 5-hydroxyl of shikimate-3-phosphate (S3P) to produce enolpyruvyl shikimate-3-phosphate and inorganic phosphate. The polypeptide is 3-phosphoshikimate 1-carboxyvinyltransferase (Rhizobium etli (strain CIAT 652)).